Consider the following 451-residue polypeptide: Ubiquinone biosynthesis monooxygenase COQ6, mitochondrial (451 aa).

This sequence belongs to the UbiH/COQ6 family. In terms of assembly, component of a multi-subunit COQ enzyme complex. The cofactor is FAD.

The protein localises to the mitochondrion inner membrane. It catalyses the reaction a 4-hydroxy-3-(all-trans-polyprenyl)benzoate + 2 reduced [2Fe-2S]-[ferredoxin] + O2 + 2 H(+) = a 3,4-dihydroxy-5-(all-trans-polyprenyl)benzoate + 2 oxidized [2Fe-2S]-[ferredoxin] + H2O. It carries out the reaction a 2-methoxy-6-(all-trans-polyprenyl)phenol + 2 reduced [2Fe-2S]-[ferredoxin] + O2 + 2 H(+) = a 2-methoxy-6-(all-trans-polyprenyl)benzene-1,4-diol + 2 oxidized [2Fe-2S]-[ferredoxin] + H2O. The protein operates within cofactor biosynthesis; ubiquinone biosynthesis. Its function is as follows. FAD-dependent monooxygenase required for two non-consecutive steps during ubiquinone biosynthesis. Required for the C5-ring hydroxylation during ubiquinone biosynthesis by catalyzing the hydroxylation of 4-hydroxy-3-(all-trans-polyprenyl)benzoic acid to 3,4-dihydroxy-5-(all-trans-polyprenyl)benzoic acid. Also acts downstream of coq4, for the C1-hydroxylation during ubiquinone biosynthesis by catalyzing the hydroxylation of 2-methoxy-6-(all-trans-polyprenyl)phenol to 2-methoxy-6-(all-trans-polyprenyl)benzene-1,4-diol. The electrons required for the hydroxylation reaction are funneled indirectly to coq-6 from NADPH via a ferredoxin/ferredoxin reductase system. In Caenorhabditis elegans, this protein is Ubiquinone biosynthesis monooxygenase COQ6, mitochondrial.